A 286-amino-acid chain; its full sequence is 4-diphosphocytidyl-2-C-methyl-D-erythritol kinase (286 aa).

The active site involves Lys11. Position 93 to 103 (93 to 103 (PFGAGLGGGSS)) interacts with ATP. Asp135 is a catalytic residue.

This sequence belongs to the GHMP kinase family. IspE subfamily.

The catalysed reaction is 4-CDP-2-C-methyl-D-erythritol + ATP = 4-CDP-2-C-methyl-D-erythritol 2-phosphate + ADP + H(+). It functions in the pathway isoprenoid biosynthesis; isopentenyl diphosphate biosynthesis via DXP pathway; isopentenyl diphosphate from 1-deoxy-D-xylulose 5-phosphate: step 3/6. In terms of biological role, catalyzes the phosphorylation of the position 2 hydroxy group of 4-diphosphocytidyl-2C-methyl-D-erythritol. The chain is 4-diphosphocytidyl-2-C-methyl-D-erythritol kinase from Chlorobaculum tepidum (strain ATCC 49652 / DSM 12025 / NBRC 103806 / TLS) (Chlorobium tepidum).